Consider the following 304-residue polypeptide: UDP-N-acetylenolpyruvoylglucosamine reductase (304 aa).

Residues arginine 32–glycine 198 enclose the FAD-binding PCMH-type domain. Arginine 177 is an active-site residue. Residue serine 227 is the Proton donor of the active site. The active site involves glutamate 297.

This sequence belongs to the MurB family. FAD serves as cofactor.

The protein localises to the cytoplasm. It catalyses the reaction UDP-N-acetyl-alpha-D-muramate + NADP(+) = UDP-N-acetyl-3-O-(1-carboxyvinyl)-alpha-D-glucosamine + NADPH + H(+). It functions in the pathway cell wall biogenesis; peptidoglycan biosynthesis. In terms of biological role, cell wall formation. This is UDP-N-acetylenolpyruvoylglucosamine reductase from Clostridioides difficile (strain 630) (Peptoclostridium difficile).